The chain runs to 171 residues: MKVYACLCAAVVMLVMTSRVSEARSTGAPLSACRDMMPQHNATAQTSPPPYTITTDAQSVAPGDSVEVVIAGKLPEDTLRGYLLQARQGDDILGTFSLEDGDVFSQLINCGKPGNAVTHKKHDNKEDKRQVRVRWSPPQGLTGEVVFRATIVKTLKVFWVGVQSAPIKIVS.

Positions 1–23 are cleaved as a signal peptide; that stretch reads MKVYACLCAAVVMLVMTSRVSEA. In terms of domain architecture, Reelin spans 24–171; the sequence is RSTGAPLSAC…VQSAPIKIVS (148 aa). Cysteine 33 and cysteine 110 form a disulfide bridge. Asparagine 41 is a glycosylation site (N-linked (GlcNAc...) asparagine).

It belongs to the insect defense protein family.

It localises to the secreted. Functionally, may have antimicrobial activity. The chain is Putative defense protein from Bombyx mori (Silk moth).